A 118-amino-acid chain; its full sequence is Large ribosomal subunit protein bL20 (118 aa).

The protein belongs to the bacterial ribosomal protein bL20 family.

In terms of biological role, binds directly to 23S ribosomal RNA and is necessary for the in vitro assembly process of the 50S ribosomal subunit. It is not involved in the protein synthesizing functions of that subunit. This is Large ribosomal subunit protein bL20 from Staphylococcus haemolyticus (strain JCSC1435).